Consider the following 166-residue polypeptide: MLAKTVFPRGLLVLRSFSSVASKTLLKVGDVLRETRVFSSEDIKAYAEVSHDWNPLHFDPESARKAGFENRLVHGMLVSSMFPRIISAHFPGAVYVSQSLHFRSPVYIGDEILGLVQAIALRETKNKYIVKFSTKCFKNHNELVVIDGEATAILPNLDMLQKSPSE.

A mitochondrion-targeting transit peptide spans 1-17 (MLAKTVFPRGLLVLRSF). A MaoC-like domain is found at 34–125 (ETRVFSSEDI…VQAIALRETK (92 aa)).

As to quaternary structure, homodimer. Expressed in leaves, roots, siliques and flowers.

It is found in the mitochondrion. The enzyme catalyses a (3R)-hydroxyacyl-[ACP] = a (2E)-enoyl-[ACP] + H2O. It carries out the reaction (3R)-hydroxyhexadecanoyl-[ACP] = (2E)-hexadecenoyl-[ACP] + H2O. It catalyses the reaction (3R)-hydroxydecanoyl-[ACP] = (2E)-decenoyl-[ACP] + H2O. It participates in lipid metabolism; fatty acid biosynthesis. 3-hydroxyl-[acyl-carrier-protein] (3-hydroxyl-ACP) dehydratase required for mitochondrial fatty acid synthesis (mtFAS). MtFAS are essential for photorespiration and plant development, probably by influencing mitochondrial membrane lipid composition and other lipid metabolic pathways. This is 3-hydroxyacyl-[acyl-carrier-protein] dehydratase, mitochondrial from Arabidopsis thaliana (Mouse-ear cress).